The sequence spans 208 residues: Small ribosomal subunit protein uS4 (208 aa).

In terms of domain architecture, S4 RNA-binding spans 98–159 (RRLDNVVYRL…KSRKIVSIND (62 aa)).

Belongs to the universal ribosomal protein uS4 family. Part of the 30S ribosomal subunit. Contacts protein S5. The interaction surface between S4 and S5 is involved in control of translational fidelity.

In terms of biological role, one of the primary rRNA binding proteins, it binds directly to 16S rRNA where it nucleates assembly of the body of the 30S subunit. Functionally, with S5 and S12 plays an important role in translational accuracy. The sequence is that of Small ribosomal subunit protein uS4 from Pelobacter propionicus (strain DSM 2379 / NBRC 103807 / OttBd1).